Consider the following 285-residue polypeptide: Bifunctional protein FolD (285 aa).

Residues glycine 165–serine 167 and serine 190 contribute to the NADP(+) site.

The protein belongs to the tetrahydrofolate dehydrogenase/cyclohydrolase family. Homodimer.

The catalysed reaction is (6R)-5,10-methylene-5,6,7,8-tetrahydrofolate + NADP(+) = (6R)-5,10-methenyltetrahydrofolate + NADPH. It carries out the reaction (6R)-5,10-methenyltetrahydrofolate + H2O = (6R)-10-formyltetrahydrofolate + H(+). It functions in the pathway one-carbon metabolism; tetrahydrofolate interconversion. Functionally, catalyzes the oxidation of 5,10-methylenetetrahydrofolate to 5,10-methenyltetrahydrofolate and then the hydrolysis of 5,10-methenyltetrahydrofolate to 10-formyltetrahydrofolate. In Staphylococcus haemolyticus (strain JCSC1435), this protein is Bifunctional protein FolD.